The following is a 427-amino-acid chain: Peptidase B (427 aa).

Mn(2+) is bound by residues Lys-195 and Asp-200. Lys-207 is a catalytic residue. Residues Asp-218, Asp-277, and Glu-279 each contribute to the Mn(2+) site. Residue Arg-281 is part of the active site.

Belongs to the peptidase M17 family. Homohexamer. Mn(2+) serves as cofactor.

The protein resides in the cytoplasm. The enzyme catalyses Release of an N-terminal amino acid, Xaa, from a peptide or arylamide. Xaa is preferably Glu or Asp but may be other amino acids, including Leu, Met, His, Cys and Gln.. Probably plays an important role in intracellular peptide degradation. In Salmonella typhi, this protein is Peptidase B.